The following is a 78-amino-acid chain: MSTIEERVKKIVAEQLGVKEEEVKNESSFVDDLGADSLDTVELVMALEEEFETEIPDEEAEKITTVQAAIDYVNAHQG.

A Carrier domain is found at 2–77 (STIEERVKKI…AAIDYVNAHQ (76 aa)). At Ser-37 the chain carries O-(pantetheine 4'-phosphoryl)serine.

It belongs to the acyl carrier protein (ACP) family. In terms of processing, 4'-phosphopantetheine is transferred from CoA to a specific serine of apo-ACP by AcpS. This modification is essential for activity because fatty acids are bound in thioester linkage to the sulfhydryl of the prosthetic group.

The protein localises to the cytoplasm. It functions in the pathway lipid metabolism; fatty acid biosynthesis. Carrier of the growing fatty acid chain in fatty acid biosynthesis. In Pseudomonas entomophila (strain L48), this protein is Acyl carrier protein.